The chain runs to 944 residues: Protein translocase subunit SecA (944 aa).

ATP contacts are provided by residues Q96, G114–T118, and D554.

It belongs to the SecA family. In terms of assembly, monomer and homodimer. Part of the essential Sec protein translocation apparatus which comprises SecA, SecYEG and auxiliary proteins SecDF. Other proteins may also be involved.

It localises to the cell inner membrane. The protein localises to the cytoplasm. It catalyses the reaction ATP + H2O + cellular proteinSide 1 = ADP + phosphate + cellular proteinSide 2.. Its function is as follows. Part of the Sec protein translocase complex. Interacts with the SecYEG preprotein conducting channel. Has a central role in coupling the hydrolysis of ATP to the transfer of proteins into and across the cell membrane, serving as an ATP-driven molecular motor driving the stepwise translocation of polypeptide chains across the membrane. This Hydrogenobaculum sp. (strain Y04AAS1) protein is Protein translocase subunit SecA.